We begin with the raw amino-acid sequence, 200 residues long: Pyridoxal 5'-phosphate synthase subunit PdxT (200 aa).

Residue 52–54 participates in L-glutamine binding; it reads GES. Cys84 (nucleophile) is an active-site residue. L-glutamine-binding positions include Arg116 and 145–146; that span reads IR. Catalysis depends on charge relay system residues His181 and Glu183.

Belongs to the glutaminase PdxT/SNO family. As to quaternary structure, in the presence of PdxS, forms a dodecamer of heterodimers. Only shows activity in the heterodimer.

It catalyses the reaction aldehydo-D-ribose 5-phosphate + D-glyceraldehyde 3-phosphate + L-glutamine = pyridoxal 5'-phosphate + L-glutamate + phosphate + 3 H2O + H(+). The catalysed reaction is L-glutamine + H2O = L-glutamate + NH4(+). It participates in cofactor biosynthesis; pyridoxal 5'-phosphate biosynthesis. In terms of biological role, catalyzes the hydrolysis of glutamine to glutamate and ammonia as part of the biosynthesis of pyridoxal 5'-phosphate. The resulting ammonia molecule is channeled to the active site of PdxS. The sequence is that of Pyridoxal 5'-phosphate synthase subunit PdxT from Sulfolobus acidocaldarius (strain ATCC 33909 / DSM 639 / JCM 8929 / NBRC 15157 / NCIMB 11770).